The chain runs to 25 residues: Histone H4 (25 aa).

A compositionally biased stretch (gly residues) spans 1–14 (MSGRGKGGKGLGKG). The segment at 1–25 (MSGRGKGGKGLGKGGAKRHRKVLRD) is disordered. S2 is subject to N-acetylserine. K6, K9, K13, K17, and K21 each carry N6-acetyllysine. Basic residues predominate over residues 15–25 (GAKRHRKVLRD). Residues 17–21 (KRHRK) mediate DNA binding.

This sequence belongs to the histone H4 family. As to quaternary structure, the nucleosome is a histone octamer containing two molecules each of H2A, H2B, H3 and H4 assembled in one H3-H4 heterotetramer and two H2A-H2B heterodimers. The octamer wraps approximately 147 bp of DNA.

It is found in the nucleus. The protein resides in the chromosome. Its function is as follows. Core component of nucleosome. Nucleosomes wrap and compact DNA into chromatin, limiting DNA accessibility to the cellular machineries which require DNA as a template. Histones thereby play a central role in transcription regulation, DNA repair, DNA replication and chromosomal stability. DNA accessibility is regulated via a complex set of post-translational modifications of histones, also called histone code, and nucleosome remodeling. This Medicago sativa (Alfalfa) protein is Histone H4.